Consider the following 396-residue polypeptide: Probable tRNA sulfurtransferase (396 aa).

Residues 58–169 (NQFIEKLKMV…KKNIYVFTRS (112 aa)) form the THUMP domain. Residues 187-188 (LL), 212-213 (YF), Arg-269, Gly-291, and Gln-300 contribute to the ATP site.

The protein belongs to the ThiI family.

It localises to the cytoplasm. The enzyme catalyses [ThiI sulfur-carrier protein]-S-sulfanyl-L-cysteine + a uridine in tRNA + 2 reduced [2Fe-2S]-[ferredoxin] + ATP + H(+) = [ThiI sulfur-carrier protein]-L-cysteine + a 4-thiouridine in tRNA + 2 oxidized [2Fe-2S]-[ferredoxin] + AMP + diphosphate. It catalyses the reaction [ThiS sulfur-carrier protein]-C-terminal Gly-Gly-AMP + S-sulfanyl-L-cysteinyl-[cysteine desulfurase] + AH2 = [ThiS sulfur-carrier protein]-C-terminal-Gly-aminoethanethioate + L-cysteinyl-[cysteine desulfurase] + A + AMP + 2 H(+). The protein operates within cofactor biosynthesis; thiamine diphosphate biosynthesis. Its function is as follows. Catalyzes the ATP-dependent transfer of a sulfur to tRNA to produce 4-thiouridine in position 8 of tRNAs, which functions as a near-UV photosensor. Also catalyzes the transfer of sulfur to the sulfur carrier protein ThiS, forming ThiS-thiocarboxylate. This is a step in the synthesis of thiazole, in the thiamine biosynthesis pathway. The sulfur is donated as persulfide by IscS. The sequence is that of Probable tRNA sulfurtransferase from Halothermothrix orenii (strain H 168 / OCM 544 / DSM 9562).